A 600-amino-acid chain; its full sequence is Sulfite reductase [NADPH] flavoprotein alpha-component (600 aa).

A Flavodoxin-like domain is found at 63 to 201 (ITLISASQTG…VADQWRKQLT (139 aa)). FMN-binding positions include 69–74 (SQTGNA), 116–119 (STQG), and 152–161 (LGDTSYERFC). Residues 235-449 (QAPLTAALAT…IEHNDNFRLP (215 aa)) enclose the FAD-binding FR-type domain. Residues threonine 323, histidine 357, 387–390 (RLYS), 405–407 (TVG), tyrosine 411, and 420–423 (GGAS) each bind FAD. NADP(+) contacts are provided by residues 520–521 (SR), 526–530 (KIYVQ), and aspartate 562. Residue tyrosine 600 coordinates FAD.

The protein belongs to the NADPH-dependent sulphite reductase flavoprotein subunit CysJ family. This sequence in the N-terminal section; belongs to the flavodoxin family. In the C-terminal section; belongs to the flavoprotein pyridine nucleotide cytochrome reductase family. In terms of assembly, alpha(8)-beta(8). The alpha component is a flavoprotein, the beta component is a hemoprotein. FAD is required as a cofactor. Requires FMN as cofactor.

It catalyses the reaction hydrogen sulfide + 3 NADP(+) + 3 H2O = sulfite + 3 NADPH + 4 H(+). It functions in the pathway sulfur metabolism; hydrogen sulfide biosynthesis; hydrogen sulfide from sulfite (NADPH route): step 1/1. Component of the sulfite reductase complex that catalyzes the 6-electron reduction of sulfite to sulfide. This is one of several activities required for the biosynthesis of L-cysteine from sulfate. The flavoprotein component catalyzes the electron flow from NADPH -&gt; FAD -&gt; FMN to the hemoprotein component. The protein is Sulfite reductase [NADPH] flavoprotein alpha-component of Photorhabdus laumondii subsp. laumondii (strain DSM 15139 / CIP 105565 / TT01) (Photorhabdus luminescens subsp. laumondii).